The chain runs to 204 residues: Ribonuclease HII (204 aa).

The 192-residue stretch at 13–204 (GPVAGCDEAG…VRRAARLHSS (192 aa)) folds into the RNase H type-2 domain. Residues aspartate 19, glutamate 20, and aspartate 113 each contribute to the a divalent metal cation site.

The protein belongs to the RNase HII family. Mn(2+) serves as cofactor. It depends on Mg(2+) as a cofactor.

The protein localises to the cytoplasm. The enzyme catalyses Endonucleolytic cleavage to 5'-phosphomonoester.. In terms of biological role, endonuclease that specifically degrades the RNA of RNA-DNA hybrids. The polypeptide is Ribonuclease HII (Cutibacterium acnes (strain DSM 16379 / KPA171202) (Propionibacterium acnes)).